The primary structure comprises 129 residues: Small ribosomal subunit protein uS11 (129 aa).

This sequence belongs to the universal ribosomal protein uS11 family. As to quaternary structure, part of the 30S ribosomal subunit. Interacts with proteins S7 and S18. Binds to IF-3.

Located on the platform of the 30S subunit, it bridges several disparate RNA helices of the 16S rRNA. Forms part of the Shine-Dalgarno cleft in the 70S ribosome. The protein is Small ribosomal subunit protein uS11 of Bartonella bacilliformis (strain ATCC 35685 / KC583 / Herrer 020/F12,63).